Reading from the N-terminus, the 704-residue chain is Tetratricopeptide repeat protein 12 (704 aa).

At threonine 71 the chain carries Phosphothreonine. TPR repeat units lie at residues 105–138 (ADAL…LKDM), 139–172 (KVLY…DENC), and 173–206 (TKAY…NPKL).

It localises to the cytoplasm. Its function is as follows. Cytoplasmic protein that plays a role in the proper assembly of dynein arm complexes in motile cilia in both respiratory cells and sperm flagella. This chain is Tetratricopeptide repeat protein 12 (Ttc12), found in Mus musculus (Mouse).